Here is a 282-residue protein sequence, read N- to C-terminus: Bifunctional protein FolD (282 aa).

Residues 163–165, threonine 188, and isoleucine 229 each bind NADP(+); that span reads NRS.

It belongs to the tetrahydrofolate dehydrogenase/cyclohydrolase family. As to quaternary structure, homodimer.

The catalysed reaction is (6R)-5,10-methylene-5,6,7,8-tetrahydrofolate + NADP(+) = (6R)-5,10-methenyltetrahydrofolate + NADPH. It catalyses the reaction (6R)-5,10-methenyltetrahydrofolate + H2O = (6R)-10-formyltetrahydrofolate + H(+). The protein operates within one-carbon metabolism; tetrahydrofolate interconversion. Catalyzes the oxidation of 5,10-methylenetetrahydrofolate to 5,10-methenyltetrahydrofolate and then the hydrolysis of 5,10-methenyltetrahydrofolate to 10-formyltetrahydrofolate. This is Bifunctional protein FolD from Malacoplasma penetrans (strain HF-2) (Mycoplasma penetrans).